Reading from the N-terminus, the 317-residue chain is Homoserine kinase (317 aa).

Residue 95-105 (PHSRGLGSSAA) coordinates ATP.

It belongs to the GHMP kinase family. Homoserine kinase subfamily.

It is found in the cytoplasm. It catalyses the reaction L-homoserine + ATP = O-phospho-L-homoserine + ADP + H(+). The protein operates within amino-acid biosynthesis; L-threonine biosynthesis; L-threonine from L-aspartate: step 4/5. In terms of biological role, catalyzes the ATP-dependent phosphorylation of L-homoserine to L-homoserine phosphate. In Mycolicibacterium smegmatis (strain ATCC 700084 / mc(2)155) (Mycobacterium smegmatis), this protein is Homoserine kinase.